The primary structure comprises 289 residues: tRNA-cytidine(32) 2-sulfurtransferase (289 aa).

The PP-loop motif motif lies at 39–44; that stretch reads SGGKDS. 3 residues coordinate [4Fe-4S] cluster: C114, C117, and C205.

It belongs to the TtcA family. As to quaternary structure, homodimer. It depends on Mg(2+) as a cofactor. Requires [4Fe-4S] cluster as cofactor.

It localises to the cytoplasm. The enzyme catalyses cytidine(32) in tRNA + S-sulfanyl-L-cysteinyl-[cysteine desulfurase] + AH2 + ATP = 2-thiocytidine(32) in tRNA + L-cysteinyl-[cysteine desulfurase] + A + AMP + diphosphate + H(+). It functions in the pathway tRNA modification. In terms of biological role, catalyzes the ATP-dependent 2-thiolation of cytidine in position 32 of tRNA, to form 2-thiocytidine (s(2)C32). The sulfur atoms are provided by the cysteine/cysteine desulfurase (IscS) system. This is tRNA-cytidine(32) 2-sulfurtransferase from Deinococcus geothermalis (strain DSM 11300 / CIP 105573 / AG-3a).